We begin with the raw amino-acid sequence, 630 residues long: 1,4-alpha-glucan branching enzyme GlgB (630 aa).

Residue Asp308 is the Nucleophile of the active site. Glu361 serves as the catalytic Proton donor.

It belongs to the glycosyl hydrolase 13 family. GlgB subfamily. As to quaternary structure, monomer.

It catalyses the reaction Transfers a segment of a (1-&gt;4)-alpha-D-glucan chain to a primary hydroxy group in a similar glucan chain.. The protein operates within glycan biosynthesis; glycogen biosynthesis. Catalyzes the formation of the alpha-1,6-glucosidic linkages in glycogen by scission of a 1,4-alpha-linked oligosaccharide from growing alpha-1,4-glucan chains and the subsequent attachment of the oligosaccharide to the alpha-1,6 position. The protein is 1,4-alpha-glucan branching enzyme GlgB of Halothermothrix orenii (strain H 168 / OCM 544 / DSM 9562).